Consider the following 458-residue polypeptide: Argininosuccinate lyase (458 aa).

It belongs to the lyase 1 family. Argininosuccinate lyase subfamily.

It localises to the cytoplasm. It catalyses the reaction 2-(N(omega)-L-arginino)succinate = fumarate + L-arginine. The protein operates within amino-acid biosynthesis; L-arginine biosynthesis; L-arginine from L-ornithine and carbamoyl phosphate: step 3/3. The sequence is that of Argininosuccinate lyase from Salmonella typhimurium (strain LT2 / SGSC1412 / ATCC 700720).